The chain runs to 86 residues: Toxin TdNa7 (86 aa).

The N-terminal stretch at 1 to 20 is a signal peptide; it reads MTRFVLFLSCFFLIGMVVEC. Positions 21–83 constitute an LCN-type CS-alpha/beta domain; the sequence is KDGYLMGPDG…TWERATNTCG (63 aa). Disulfide bonds link C31–C82, C35–C57, C43–C63, and C47–C65. A Lysine amide modification is found at K84.

This sequence belongs to the long (4 C-C) scorpion toxin superfamily. Sodium channel inhibitor family. Beta subfamily. As to expression, expressed by the venom gland.

It is found in the secreted. In terms of biological role, beta toxins bind voltage-independently at site-4 of sodium channels (Nav) and shift the voltage of activation toward more negative potentials thereby affecting sodium channel activation and promoting spontaneous and repetitive firing. In Tityus discrepans (Venezuelan scorpion), this protein is Toxin TdNa7.